We begin with the raw amino-acid sequence, 326 residues long: GTP 3',8-cyclase (326 aa).

The Radical SAM core domain maps to 7–240 (AFARKFYYLR…AQVFHHSDYQ (234 aa)). Arginine 16 contacts GTP. 2 residues coordinate [4Fe-4S] cluster: cysteine 23 and cysteine 27. Position 29 (tyrosine 29) interacts with S-adenosyl-L-methionine. Position 30 (cysteine 30) interacts with [4Fe-4S] cluster. Arginine 65 contacts GTP. Position 69 (glycine 69) interacts with S-adenosyl-L-methionine. Threonine 96 contributes to the GTP binding site. Serine 120 is a binding site for S-adenosyl-L-methionine. Lysine 157 is a GTP binding site. Position 191 (methionine 191) interacts with S-adenosyl-L-methionine. [4Fe-4S] cluster-binding residues include cysteine 254 and cysteine 257. Position 259-261 (259-261 (RLR)) interacts with GTP. Residue cysteine 271 coordinates [4Fe-4S] cluster.

Belongs to the radical SAM superfamily. MoaA family. Monomer and homodimer. It depends on [4Fe-4S] cluster as a cofactor.

The enzyme catalyses GTP + AH2 + S-adenosyl-L-methionine = (8S)-3',8-cyclo-7,8-dihydroguanosine 5'-triphosphate + 5'-deoxyadenosine + L-methionine + A + H(+). It functions in the pathway cofactor biosynthesis; molybdopterin biosynthesis. Functionally, catalyzes the cyclization of GTP to (8S)-3',8-cyclo-7,8-dihydroguanosine 5'-triphosphate. This chain is GTP 3',8-cyclase, found in Yersinia pestis.